A 265-amino-acid polypeptide reads, in one-letter code: Cytochrome c oxidase subunit 3 (265 aa).

Transmembrane regions (helical) follow at residues Pro16–Met36, Gly41–Trp61, Tyr84–Ser104, Ala162–Met182, Phe200–Val220, and Trp245–Ile265.

The protein belongs to the cytochrome c oxidase subunit 3 family. In terms of assembly, component of the cytochrome c oxidase (complex IV, CIV), a multisubunit enzyme composed of a catalytic core of 3 subunits and several supernumerary subunits. The complex exists as a monomer or a dimer and forms supercomplexes (SCs) in the inner mitochondrial membrane with ubiquinol-cytochrome c oxidoreductase (cytochrome b-c1 complex, complex III, CIII).

It localises to the mitochondrion inner membrane. It carries out the reaction 4 Fe(II)-[cytochrome c] + O2 + 8 H(+)(in) = 4 Fe(III)-[cytochrome c] + 2 H2O + 4 H(+)(out). Component of the cytochrome c oxidase, the last enzyme in the mitochondrial electron transport chain which drives oxidative phosphorylation. The respiratory chain contains 3 multisubunit complexes succinate dehydrogenase (complex II, CII), ubiquinol-cytochrome c oxidoreductase (cytochrome b-c1 complex, complex III, CIII) and cytochrome c oxidase (complex IV, CIV), that cooperate to transfer electrons derived from NADH and succinate to molecular oxygen, creating an electrochemical gradient over the inner membrane that drives transmembrane transport and the ATP synthase. Cytochrome c oxidase is the component of the respiratory chain that catalyzes the reduction of oxygen to water. Electrons originating from reduced cytochrome c in the intermembrane space (IMS) are transferred via the dinuclear copper A center (CU(A)) of subunit 2 and heme A of subunit 1 to the active site in subunit 1, a binuclear center (BNC) formed by heme A3 and copper B (CU(B)). The BNC reduces molecular oxygen to 2 water molecules using 4 electrons from cytochrome c in the IMS and 4 protons from the mitochondrial matrix. This chain is Cytochrome c oxidase subunit 3 (COX3), found in Aegilops columnaris (Goatgrass).